Here is a 352-residue protein sequence, read N- to C-terminus: Ion-translocating oxidoreductase complex subunit D (352 aa).

5 consecutive transmembrane segments (helical) span residues 20-40 (IMLL…WFFG), 42-62 (GTLV…ALVL), 78-109 (ALLT…VIIA), 123-143 (PAMI…TSWL), and 148-168 (IAVN…GHTA). At T187 the chain carries FMN phosphoryl threonine. Transmembrane regions (helical) follow at residues 214-234 (ILAG…GVWL), 242-262 (WHIP…GWLF), 267-287 (LAAP…FFIL), 301-321 (LIFG…GGYP), and 322-342 (DGVA…DYYT).

The protein belongs to the NqrB/RnfD family. In terms of assembly, the complex is composed of six subunits: RsxA, RsxB, RsxC, RsxD, RsxE and RsxG. The cofactor is FMN.

It is found in the cell inner membrane. Part of a membrane-bound complex that couples electron transfer with translocation of ions across the membrane. Required to maintain the reduced state of SoxR. The chain is Ion-translocating oxidoreductase complex subunit D from Escherichia coli O139:H28 (strain E24377A / ETEC).